We begin with the raw amino-acid sequence, 335 residues long: tRNA N6-adenosine threonylcarbamoyltransferase (335 aa).

Residues H110 and H114 each contribute to the Fe cation site. Substrate is bound by residues 132-136 (LVSGG), D165, G178, and N271. Fe cation is bound at residue D299.

It belongs to the KAE1 / TsaD family. It depends on Fe(2+) as a cofactor.

It is found in the cytoplasm. It catalyses the reaction L-threonylcarbamoyladenylate + adenosine(37) in tRNA = N(6)-L-threonylcarbamoyladenosine(37) in tRNA + AMP + H(+). Functionally, required for the formation of a threonylcarbamoyl group on adenosine at position 37 (t(6)A37) in tRNAs that read codons beginning with adenine. Is involved in the transfer of the threonylcarbamoyl moiety of threonylcarbamoyl-AMP (TC-AMP) to the N6 group of A37, together with TsaE and TsaB. TsaD likely plays a direct catalytic role in this reaction. This chain is tRNA N6-adenosine threonylcarbamoyltransferase, found in Campylobacter jejuni subsp. doylei (strain ATCC BAA-1458 / RM4099 / 269.97).